A 380-amino-acid polypeptide reads, in one-letter code: Spore coat protein B (380 aa).

The interval 224-364 (GPKGSYKKED…SSGKQKEDYS (141 aa)) is disordered. The span at 229-248 (YKKEDQKNEQNQEDNNDKDS) shows a compositional bias: basic and acidic residues. Composition is skewed to low complexity over residues 275–288 (SKSGRSSRSKSSSK), 296–315 (SSDYQSSKSGRSSRSKSSSK), and 338–356 (SSDYQSSRSPGYSSSIKSS).

The sequence is that of Spore coat protein B (cotB) from Bacillus subtilis (strain 168).